The primary structure comprises 327 residues: Cytochrome f (327 aa).

The first 24 residues, 1–24, serve as a signal peptide directing secretion; the sequence is MKRIGLVFCALLLLLGMGARPAAA. Residues tyrosine 25, cysteine 45, cysteine 48, and histidine 49 each coordinate heme. Residues 293-313 form a helical membrane-spanning segment; sequence VKWLVAFLAAITITQVLLVLK.

It belongs to the cytochrome f family. As to quaternary structure, the 4 large subunits of the cytochrome b6-f complex are cytochrome b6, subunit IV (17 kDa polypeptide, PetD), cytochrome f and the Rieske protein, while the 4 small subunits are PetG, PetL, PetM and PetN. The complex functions as a dimer. It depends on heme as a cofactor.

The protein localises to the cellular thylakoid membrane. In terms of biological role, component of the cytochrome b6-f complex, which mediates electron transfer between photosystem II (PSII) and photosystem I (PSI), cyclic electron flow around PSI, and state transitions. This chain is Cytochrome f, found in Synechococcus sp. (strain JA-2-3B'a(2-13)) (Cyanobacteria bacterium Yellowstone B-Prime).